Here is a 437-residue protein sequence, read N- to C-terminus: Inactive peptidyl-prolyl cis-trans isomerase shutdown (437 aa).

Residues 92–178 (DSEVTIHYAA…RPEPALFVIV (87 aa)) enclose the PPIase FKBP-type domain. 3 TPR repeats span residues 209–242 (VNAL…LRLS), 258–294 (VNAY…EKHC), and 295–327 (KALY…EPKN).

The protein belongs to the FKBP6 family. In terms of assembly, interacts with Hsp83.

The protein localises to the cytoplasm. Functionally, co-chaperone required during oogenesis to repress transposable elements and prevent their mobilization, which is essential for the germline integrity. Acts via the piRNA metabolic process, which mediates the repression of transposable elements during meiosis by forming complexes composed of piRNAs and Piwi proteins and govern the methylation and subsequent repression of transposons. Acts as a co-chaperone via its interaction with Hsp83/HSP90 and is required for the biogenesis of all three piRNA major populations. The sequence is that of Inactive peptidyl-prolyl cis-trans isomerase shutdown (shu) from Bombyx mori (Silk moth).